A 123-amino-acid polypeptide reads, in one-letter code: Beta-defensin 126 (123 aa).

A signal peptide spans 1–20 (MKSLLFTLAVFMLLAQLVSG). The interval 21–63 (NLYVKRCLNDIGICKKTCKPEEVRSEHGWVMCGKRKACCVPAD) is in vitro binds to LPS, mediates antimicrobial activity and inhibits LPS-mediated inflammation. 3 cysteine pairs are disulfide-bonded: Cys-27–Cys-58, Cys-34–Cys-52, and Cys-38–Cys-59.

This sequence belongs to the beta-defensin family. In terms of assembly, homodimer or homooligomer; disulfide-linked. Post-translationally, O-glycosylated; glycans contain sialic acids alpha(2,3)-linked to galactose and N-acetylgalactosamine. The C-terminal O-glycosylation contributes substantially to the sperm glyocalyx. As to expression, high-level and epididymis-specific expression. Detected in epithelial cells lining the efferent ductules, initial segment, and cauda regions of the epididymis, but not on spermatozoa.

The protein localises to the secreted. Functionally, highly glycosylated atypical beta-defensin involved in several aspects of sperm function. Facilitates sperm transport in the female reproductive tract and contributes to sperm protection against immunodetection; both functions are probably implicating the negative surface charge provided by its O-linked oligosaccharides in the sperm glycocalyx. Involved in binding of sperm to oviductal epithelial cells to form a sperm reservoir until ovulation. Release from the sperm surface during capacitation and ovaluation by an elevation of oviductal fluid pH is unmasking other surface components and allows sperm to penetrate the cumulus matrix and bind to the zona pellucida of the oocyte. In vitro has antimicrobial activity and may inhibit LPS-mediated inflammation. This is Beta-defensin 126 (DEFB126) from Macaca fascicularis (Crab-eating macaque).